Here is a 1189-residue protein sequence, read N- to C-terminus: Tyrosine-protein phosphatase non-receptor type 14 (1189 aa).

One can recognise an FERM domain in the interval 21–306; that stretch reads FVTRIRLLDS…TRHKFYKQNK (286 aa). Phosphoserine is present on residues Ser-314, Ser-461, Ser-486, Ser-591, Ser-593, Ser-594, and Ser-646. The segment at 744 to 775 is disordered; sequence ARIPNRPPPEYPGPRKSVSNGALRQDQGTPLP. Positions 760 to 771 are enriched in polar residues; it reads SVSNGALRQDQG. Ser-833 is subject to Phosphoserine. In terms of domain architecture, Tyrosine-protein phosphatase spans 911–1182; it reads VFTEYEQIPN…KFVYQVLVQF (272 aa). Cys-1123 (phosphocysteine intermediate) is an active-site residue. Substrate-binding positions include 1123–1129 and Gln-1167; that span reads CSAGVGR.

The protein belongs to the protein-tyrosine phosphatase family. Non-receptor class subfamily. Interacts with FLT4; the interaction is enhanced by stimulation with VEGFC. Interacts (via PPxY motifs) with YAP1 (via WW domains); this interaction leads to the cytoplasmic sequestration of YAP1 and inhibits its transcriptional coactivator activity. Post-translationally, ubiquitinated by the ECS (Elongin BC-CUL2/5-SOCS-box protein)/LRR1 E3 ligase complex and subsequently targeted to proteasomal degradation. Thymus; in cells of both hematopoietic and non-hematopoietic origins.

Its subcellular location is the cytoplasm. The protein localises to the cytoskeleton. It localises to the nucleus. The catalysed reaction is O-phospho-L-tyrosyl-[protein] + H2O = L-tyrosyl-[protein] + phosphate. In terms of biological role, protein tyrosine phosphatase which may play a role in the regulation of lymphangiogenesis, cell-cell adhesion, cell-matrix adhesion, cell migration, cell growth and also regulates TGF-beta gene expression, thereby modulating epithelial-mesenchymal transition. Mediates beta-catenin dephosphorylation at adhesion junctions. Acts as a negative regulator of the oncogenic property of YAP, a downstream target of the hippo pathway, in a cell density-dependent manner. May function as a tumor suppressor. In Mus musculus (Mouse), this protein is Tyrosine-protein phosphatase non-receptor type 14 (Ptpn14).